The following is a 406-amino-acid chain: Peptidase T (406 aa).

H78 lines the Zn(2+) pocket. Residue D80 is part of the active site. D139 provides a ligand contact to Zn(2+). The active-site Proton acceptor is E173. Zn(2+) is bound by residues E174, D196, and H378.

It belongs to the peptidase M20B family. Zn(2+) is required as a cofactor.

Its subcellular location is the cytoplasm. The enzyme catalyses Release of the N-terminal residue from a tripeptide.. Its function is as follows. Cleaves the N-terminal amino acid of tripeptides. The chain is Peptidase T from Clostridium perfringens (strain 13 / Type A).